We begin with the raw amino-acid sequence, 222 residues long: UPF0488 protein C8orf33 homolog (222 aa).

A compositionally biased stretch (low complexity) spans 1–16; sequence MAEPGRPAREAPAASS. Disordered regions lie at residues 1–103, 119–146, and 186–210; these read MAEP…AEQL, KTQR…TPLP, and VSEA…KTTP. A2 carries the N-acetylalanine modification. The span at 17 to 28 shows a compositional bias: basic residues; that stretch reads RKTHRAPRRPRP. An Omega-N-methylarginine modification is found at R27. Over residues 29 to 39 the composition is skewed to low complexity; sequence SRSASGASEPP. A Phosphoserine modification is found at S75. Residues 93–103 are compositionally biased toward low complexity; sequence PPSAEAQAEQL.

It belongs to the UPF0488 family.

In Mus musculus (Mouse), this protein is UPF0488 protein C8orf33 homolog.